The chain runs to 199 residues: Protein PPP1R35 homolog (199 aa).

The segment covering 1 to 11 (MPHKRRNRVHA) has biased composition (basic residues). Disordered stretches follow at residues 1 to 23 (MPHK…RVSV) and 36 to 60 (ESCN…AMTN). Residues 38-49 (CNGSHADNSSPD) are compositionally biased toward polar residues.

It belongs to the PPP1R35 family. Interacts with Ana3; this complex is recruited to daughter centrioles before their conversion to centrosomes.

The protein resides in the cytoplasm. The protein localises to the cytoskeleton. It is found in the microtubule organizing center. It localises to the centrosome. Its subcellular location is the centriole. Its function is as follows. Participates in the later stages of centriole assembly through the interaction with Ana3 leading to the centriole to centrosome conversion in somatic cells. This chain is Protein PPP1R35 homolog, found in Drosophila melanogaster (Fruit fly).